Consider the following 501-residue polypeptide: L-ornithine N(5)-monooxygenase (501 aa).

The span at 1-16 (MNGTSTTGNGFTNGTN) shows a compositional bias: low complexity. Residues 1 to 40 (MNGTSTTGNGFTNGTNYPVPKLELQPETTSTSPTRAQTHP) form a disordered region. Polar residues predominate over residues 26–37 (PETTSTSPTRAQ). FAD is bound by residues 92–100 (EKQSNFAWH) and Gln111. Position 116 (Lys116) interacts with substrate. Val177 provides a ligand contact to FAD. Residue 263–266 (SGQS) coordinates NADP(+). Residues 304-307 (NELF) and Asn334 each bind substrate. 334-336 (NYS) provides a ligand contact to NADP(+). 476–478 (SLL) provides a ligand contact to FAD. Residue Ser479 coordinates substrate.

This sequence belongs to the lysine N(6)-hydroxylase/L-ornithine N(5)-oxygenase family. In terms of assembly, homotetramer. It depends on FAD as a cofactor.

It carries out the reaction L-ornithine + NADPH + O2 = N(5)-hydroxy-L-ornithine + NADP(+) + H2O. The catalysed reaction is L-ornithine + NADH + O2 = N(5)-hydroxy-L-ornithine + NAD(+) + H2O. Its pathway is siderophore biosynthesis. Its function is as follows. L-ornithine N(5)-monooxygenase; part of the siderophore biosynthetic pathway. Arthroderma benhamiae produces 2 types of extracellular siderophores, ferrichrome C and ferricrocin. The biosynthesis of these siderophores depends on the hydroxylation of ornithine to N(5)-hydroxyornithine, catalyzed by the monooxygenase sidA. The structure of ferricrocin differs from ferrichrome C only by a serine for alanine substitution and the assembly of both siderophores is suggested to be performed by the nonribosomal peptide synthase (NRPS) sidC. The chain is L-ornithine N(5)-monooxygenase from Arthroderma benhamiae (strain ATCC MYA-4681 / CBS 112371) (Trichophyton mentagrophytes).